The sequence spans 171 residues: Probable DNA-directed RNA polymerase subunit delta (171 aa).

The region spanning 14 to 81 (MALVEIAYEI…SDQTWGLRSW (68 aa)) is the HTH HARE-type domain. A disordered region spans residues 138–171 (EFDEIDEADDDELDDLEDEILDDDEDFDEEEDEE).

Belongs to the RpoE family. As to quaternary structure, RNAP is composed of a core of 2 alpha, a beta and a beta' subunits. The core is associated with a delta subunit and one of several sigma factors.

In terms of biological role, participates in both the initiation and recycling phases of transcription. In the presence of the delta subunit, RNAP displays an increased specificity of transcription, a decreased affinity for nucleic acids, and an increased efficiency of RNA synthesis because of enhanced recycling. The chain is Probable DNA-directed RNA polymerase subunit delta from Bacillus licheniformis (strain ATCC 14580 / DSM 13 / JCM 2505 / CCUG 7422 / NBRC 12200 / NCIMB 9375 / NCTC 10341 / NRRL NRS-1264 / Gibson 46).